Reading from the N-terminus, the 101-residue chain is Small ribosomal subunit protein uS14 (101 aa).

This sequence belongs to the universal ribosomal protein uS14 family. In terms of assembly, part of the 30S ribosomal subunit. Contacts proteins S3 and S10.

Its function is as follows. Binds 16S rRNA, required for the assembly of 30S particles and may also be responsible for determining the conformation of the 16S rRNA at the A site. This Colwellia psychrerythraea (strain 34H / ATCC BAA-681) (Vibrio psychroerythus) protein is Small ribosomal subunit protein uS14.